A 521-amino-acid chain; its full sequence is Endoplasmic reticulum mannosyl-oligosaccharide 1,2-alpha-mannosidase (521 aa).

Topologically, residues 1 to 8 (MVKRRTVK) are cytoplasmic. A helical; Signal-anchor for type II membrane protein transmembrane segment spans residues 9-31 (YFLRRILALFVLCVPIYYLYTTV). Over 32–521 (QRPPGYTKLK…IENNMDLYTV (490 aa)) the chain is Lumenal. N-linked (GlcNAc...) asparagine glycosylation is found at Asn-114, Asn-167, Asn-300, Asn-342, and Asn-378. Cys-330 and Cys-373 form a disulfide bridge. Residue Glu-387 is the Proton donor of the active site. Asn-499 carries an N-linked (GlcNAc...) asparagine glycan. Thr-504 serves as a coordination point for Ca(2+).

Belongs to the glycosyl hydrolase 47 family. The cofactor is Ca(2+).

It is found in the membrane. It carries out the reaction N(4)-(alpha-D-Man-(1-&gt;2)-alpha-D-Man-(1-&gt;2)-alpha-D-Man-(1-&gt;3)-[alpha-D-Man-(1-&gt;2)-alpha-D-Man-(1-&gt;3)-[alpha-D-Man-(1-&gt;2)-alpha-D-Man-(1-&gt;6)]-alpha-D-Man-(1-&gt;6)]-beta-D-Man-(1-&gt;4)-beta-D-GlcNAc-(1-&gt;4)-beta-D-GlcNAc)-L-asparaginyl-[protein] (N-glucan mannose isomer 9A1,2,3B1,2,3) + 4 H2O = N(4)-(alpha-D-Man-(1-&gt;3)-[alpha-D-Man-(1-&gt;3)-[alpha-D-Man-(1-&gt;6)]-alpha-D-Man-(1-&gt;6)]-beta-D-Man-(1-&gt;4)-beta-D-GlcNAc-(1-&gt;4)-beta-D-GlcNAc)-L-asparaginyl-[protein] (N-glucan mannose isomer 5A1,2) + 4 beta-D-mannose. It catalyses the reaction N(4)-(alpha-D-Man-(1-&gt;2)-alpha-D-Man-(1-&gt;2)-alpha-D-Man-(1-&gt;3)-[alpha-D-Man-(1-&gt;3)-[alpha-D-Man-(1-&gt;2)-alpha-D-Man-(1-&gt;6)]-alpha-D-Man-(1-&gt;6)]-beta-D-Man-(1-&gt;4)-beta-D-GlcNAc-(1-&gt;4)-beta-D-GlcNAc)-L-asparaginyl-[protein] (N-glucan mannose isomer 8A1,2,3B1,3) + 3 H2O = N(4)-(alpha-D-Man-(1-&gt;3)-[alpha-D-Man-(1-&gt;3)-[alpha-D-Man-(1-&gt;6)]-alpha-D-Man-(1-&gt;6)]-beta-D-Man-(1-&gt;4)-beta-D-GlcNAc-(1-&gt;4)-beta-D-GlcNAc)-L-asparaginyl-[protein] (N-glucan mannose isomer 5A1,2) + 3 beta-D-mannose. The protein operates within protein modification; protein glycosylation. With respect to regulation, inhibited by kifunensine. Functionally, involved in glycoprotein quality control as it is important for the targeting of misfolded glycoproteins for degradation. It trims a single alpha-1,2-linked mannose residue from Man(9)GlcNAc(2) to produce Man(8)GlcNAc(2) with low efficiency. This Schizosaccharomyces pombe (strain 972 / ATCC 24843) (Fission yeast) protein is Endoplasmic reticulum mannosyl-oligosaccharide 1,2-alpha-mannosidase.